The primary structure comprises 432 residues: MTPDDIAGFYAKRADLDLDNYIELDFDFECAGDPHEAAAHLCSEQSTAQWRRVGFDEDFRPRFAAKVLELSAEPRPSGFSVPVECAARGPVHACRVTIAHPHGNFGAKIPNLLSAVCGEGVFFSPGIPLIRLQDIRFPEPYLAAFDGPRFGIAGVRERLQAFDRPIFFGVIKPNIGLPPQPFAELGYQSWTGGLDIAKDDEMLADVDWCPLAERAALLGDACRRASAETGVPKIYLANITDEVDRLTELHDVAVANGAGALLINAMPVGLSAVRMLRKHATVPLIAHFPFIAAFSRLANYGIHSRVMTRLQRLAGFDVVIMPGFGPRMMTPEHEVLDCIRACLEPMGPIKPCLPVPGGSDSAATLENVYRKVGSADFGFVPGRGVFGHPMGPAAGATSIRQAWDAIAAGIPVPDHAASHPELAAALRAFGGR.

3 residues coordinate Mg(2+): K198, D200, and E201. K198 carries the N6-carboxylysine modification.

The protein belongs to the RuBisCO large chain family. Type IV subfamily. As to quaternary structure, homodimer. It depends on Mg(2+) as a cofactor.

In terms of biological role, may be involved in sulfur metabolism and oxidative stress response. Does not show RuBisCO activity. The protein is Ribulose bisphosphate carboxylase-like protein 2 (rlp2) of Rhodopseudomonas palustris (strain ATCC BAA-98 / CGA009).